We begin with the raw amino-acid sequence, 233 residues long: Orotidine 5'-phosphate decarboxylase (233 aa).

Substrate is bound by residues D11, K34, 61–70 (DLKLHDIPNT), T117, R179, Q189, G209, and R210. The Proton donor role is filled by K63.

The protein belongs to the OMP decarboxylase family. Type 1 subfamily. In terms of assembly, homodimer.

It catalyses the reaction orotidine 5'-phosphate + H(+) = UMP + CO2. The protein operates within pyrimidine metabolism; UMP biosynthesis via de novo pathway; UMP from orotate: step 2/2. Catalyzes the decarboxylation of orotidine 5'-monophosphate (OMP) to uridine 5'-monophosphate (UMP). This chain is Orotidine 5'-phosphate decarboxylase, found in Streptococcus agalactiae serotype Ia (strain ATCC 27591 / A909 / CDC SS700).